We begin with the raw amino-acid sequence, 369 residues long: Anhydro-N-acetylmuramic acid kinase (369 aa).

Residue 12-19 coordinates ATP; the sequence is GTSLDGVD.

The protein belongs to the anhydro-N-acetylmuramic acid kinase family.

The enzyme catalyses 1,6-anhydro-N-acetyl-beta-muramate + ATP + H2O = N-acetyl-D-muramate 6-phosphate + ADP + H(+). The protein operates within amino-sugar metabolism; 1,6-anhydro-N-acetylmuramate degradation. Its pathway is cell wall biogenesis; peptidoglycan recycling. In terms of biological role, catalyzes the specific phosphorylation of 1,6-anhydro-N-acetylmuramic acid (anhMurNAc) with the simultaneous cleavage of the 1,6-anhydro ring, generating MurNAc-6-P. Is required for the utilization of anhMurNAc either imported from the medium or derived from its own cell wall murein, and thus plays a role in cell wall recycling. The polypeptide is Anhydro-N-acetylmuramic acid kinase (Escherichia coli O157:H7).